A 321-amino-acid polypeptide reads, in one-letter code: Glucokinase (321 aa).

Residue 8-13 (GDVGGT) coordinates ATP.

The protein belongs to the bacterial glucokinase family.

The protein localises to the cytoplasm. The enzyme catalyses D-glucose + ATP = D-glucose 6-phosphate + ADP + H(+). This chain is Glucokinase, found in Salmonella paratyphi B (strain ATCC BAA-1250 / SPB7).